A 193-amino-acid polypeptide reads, in one-letter code: Fe/S biogenesis protein NfuA (193 aa).

[4Fe-4S] cluster contacts are provided by cysteine 149 and cysteine 152.

It belongs to the NfuA family. As to quaternary structure, homodimer. The cofactor is [4Fe-4S] cluster.

Involved in iron-sulfur cluster biogenesis. Binds a 4Fe-4S cluster, can transfer this cluster to apoproteins, and thereby intervenes in the maturation of Fe/S proteins. Could also act as a scaffold/chaperone for damaged Fe/S proteins. The polypeptide is Fe/S biogenesis protein NfuA (Psychromonas ingrahamii (strain DSM 17664 / CCUG 51855 / 37)).